The sequence spans 180 residues: Large ribosomal subunit protein uL5 (180 aa).

It belongs to the universal ribosomal protein uL5 family. Part of the 50S ribosomal subunit; part of the 5S rRNA/L5/L18/L25 subcomplex. Contacts the 5S rRNA and the P site tRNA. Forms a bridge to the 30S subunit in the 70S ribosome.

Functionally, this is one of the proteins that bind and probably mediate the attachment of the 5S RNA into the large ribosomal subunit, where it forms part of the central protuberance. In the 70S ribosome it contacts protein S13 of the 30S subunit (bridge B1b), connecting the 2 subunits; this bridge is implicated in subunit movement. Contacts the P site tRNA; the 5S rRNA and some of its associated proteins might help stabilize positioning of ribosome-bound tRNAs. This chain is Large ribosomal subunit protein uL5, found in Lactobacillus delbrueckii subsp. bulgaricus (strain ATCC 11842 / DSM 20081 / BCRC 10696 / JCM 1002 / NBRC 13953 / NCIMB 11778 / NCTC 12712 / WDCM 00102 / Lb 14).